The chain runs to 226 residues: PKHD-type hydroxylase BP3529 (226 aa).

The Fe2OG dioxygenase domain occupies 78–178; it reads KIFPPLFNRY…RISAFFWLQS (101 aa). Histidine 96, aspartate 98, and histidine 159 together coordinate Fe cation. Arginine 169 is a 2-oxoglutarate binding site.

The cofactor is Fe(2+). It depends on L-ascorbate as a cofactor.

The protein is PKHD-type hydroxylase BP3529 of Bordetella pertussis (strain Tohama I / ATCC BAA-589 / NCTC 13251).